Here is a 746-residue protein sequence, read N- to C-terminus: Exostosin-1 (746 aa).

Topologically, residues 1-7 (MQAKKRY) are cytoplasmic. The helical; Signal-anchor for type II membrane protein transmembrane segment at 8–28 (FILLSAGSCLALLFYFGGVQF) threads the bilayer. At 29-746 (RASRSHSRRE…RKKYRDIERL (718 aa)) the chain is on the lumenal side. The N-linked (GlcNAc...) asparagine glycan is linked to asparagine 89. 2 cysteine pairs are disulfide-bonded: cysteine 98–cysteine 103 and cysteine 109–cysteine 152. Residues leucine 166 and tyrosine 203 each contribute to the a protein site. Residues lysine 267, lysine 269, tyrosine 271, and arginine 280 each coordinate UDP. An intrachain disulfide couples cysteine 298 to cysteine 312. Histidine 300 is an a protein binding site. Residues tyrosine 319 and tyrosine 324 each coordinate UDP. Asparagine 330 is a glycosylation site (N-linked (GlcNAc...) asparagine). 2 disulfide bridges follow: cysteine 334/cysteine 355 and cysteine 652/cysteine 704. The UDP site is built by arginine 346 and glutamate 349.

The protein belongs to the glycosyltransferase 47 family. In terms of assembly, part of the heparan sulfate polymerase, a dimeric complex composed of EXT1 and EXT2. Could also form homooligomeric complexes. Interacts with NDST1. Post-translationally, N-glycosylated.

The protein localises to the golgi apparatus membrane. Its subcellular location is the golgi apparatus. It is found in the cis-Golgi network membrane. It localises to the endoplasmic reticulum membrane. The catalysed reaction is 3-O-{alpha-D-GlcNAc-[(1-&gt;4)-beta-D-GlcA-(1-&gt;4)-alpha-D-GlcNAc](n)-(1-&gt;4)-beta-D-GlcA-(1-&gt;3)-beta-D-Gal-(1-&gt;3)-beta-D-Gal-(1-&gt;4)-beta-D-Xyl}-L-seryl-[protein] + UDP-alpha-D-glucuronate = 3-O-{[(1-&gt;4)-beta-D-GlcA-(1-&gt;4)-alpha-D-GlcNAc](n+1)-(1-&gt;4)-beta-D-GlcA-(1-&gt;3)-beta-D-Gal-(1-&gt;3)-beta-D-Gal-(1-&gt;4)-beta-D-Xyl}-L-seryl-[protein] + UDP + H(+). Its pathway is protein modification; protein glycosylation. Glycosyltransferase forming with EXT2 the heterodimeric heparan sulfate polymerase which catalyzes the elongation of the heparan sulfate glycan backbone. Glycan backbone extension consists in the alternating transfer of (1-&gt;4)-beta-D-GlcA and (1-&gt;4)-alpha-D-GlcNAc residues from their respective UDP-sugar donors. Both EXT1 and EXT2 are required for the full activity of the polymerase since EXT1 bears the N-acetylglucosaminyl-proteoglycan 4-beta-glucuronosyltransferase activity within the complex while EXT2 carries the glucuronosyl-N-acetylglucosaminyl-proteoglycan 4-alpha-N-acetylglucosaminyltransferase activity. Heparan sulfate proteoglycans are ubiquitous components of the extracellular matrix and play an important role in tissue homeostasis and signaling. This Mus musculus (Mouse) protein is Exostosin-1.